The following is a 214-amino-acid chain: Ceramide-1-phosphate transfer protein (214 aa).

An N-acylsphingoid base 1-phosphate is bound by residues Asp-56, Lys-60, Arg-106, Arg-110, and His-150.

This sequence belongs to the GLTP family.

The protein resides in the cytoplasm. It localises to the cytosol. It is found in the golgi apparatus. Its subcellular location is the trans-Golgi network membrane. The protein localises to the cell membrane. The protein resides in the endosome membrane. It localises to the nucleus outer membrane. The enzyme catalyses N-(hexadecanoyl)-sphing-4-enine-1-phosphate(in) = N-(hexadecanoyl)-sphing-4-enine-1-phosphate(out). It catalyses the reaction N-(9Z-octadecenoyl)-sphing-4-enine-1-phosphate(in) = N-(9Z-octadecenoyl)-sphing-4-enine-1-phosphate(out). Mediates the intracellular transfer of ceramide-1-phosphate (C1P) between organelle membranes and the cell membrane. Required for normal structure of the Golgi stacks. Can bind phosphoceramides with a variety of aliphatic chains, but has a preference for lipids with saturated C16:0 or monounsaturated C18:1 aliphatic chains, and is inefficient with phosphoceramides containing lignoceryl (C24:0). Plays a role in the regulation of the cellular levels of ceramide-1-phosphate, and thereby contributes to the regulation of phospholipase PLA2G4A activity and the release of arachidonic acid. Has no activity with galactosylceramide, lactosylceramide, sphingomyelin, phosphatidylcholine, phosphatidic acid and ceramide. C1P transfer is stimulated by phosphatidylserine in C1P source vesicles. Regulates autophagy, inflammasome mediated IL1B and IL18 processing, and pyroptosis, but not apoptosis. The polypeptide is Ceramide-1-phosphate transfer protein (CPTP) (Bos taurus (Bovine)).